The chain runs to 216 residues: DNA-directed RNA polymerase subunit alpha (216 aa).

Belongs to the RNA polymerase alpha chain family. As to quaternary structure, in plastids the minimal PEP RNA polymerase catalytic core is composed of four subunits: alpha, beta, beta', and beta''. When a (nuclear-encoded) sigma factor is associated with the core the holoenzyme is formed, which can initiate transcription.

It is found in the plastid. Its subcellular location is the chloroplast. The catalysed reaction is RNA(n) + a ribonucleoside 5'-triphosphate = RNA(n+1) + diphosphate. In terms of biological role, DNA-dependent RNA polymerase catalyzes the transcription of DNA into RNA using the four ribonucleoside triphosphates as substrates. The sequence is that of DNA-directed RNA polymerase subunit alpha (rpoA) from Euglena gracilis.